A 263-amino-acid chain; its full sequence is Acetylglutamate kinase (263 aa).

Residues 48–49 (GG), Arg-70, and Asn-162 contribute to the substrate site.

It belongs to the acetylglutamate kinase family. ArgB subfamily.

Its subcellular location is the cytoplasm. The catalysed reaction is N-acetyl-L-glutamate + ATP = N-acetyl-L-glutamyl 5-phosphate + ADP. Its pathway is amino-acid biosynthesis; L-arginine biosynthesis; N(2)-acetyl-L-ornithine from L-glutamate: step 2/4. In terms of biological role, catalyzes the ATP-dependent phosphorylation of N-acetyl-L-glutamate. In Vibrio campbellii (strain ATCC BAA-1116), this protein is Acetylglutamate kinase.